The primary structure comprises 438 residues: 23S rRNA (uracil(1939)-C(5))-methyltransferase RlmD (438 aa).

A TRAM domain is found at 11 to 69 (LQPESKHQQVLVEKLDHQGAGIAYLNKKPLFIDGTLPGEEVVTQLTESKSKFARGKLIK). [4Fe-4S] cluster is bound by residues Cys-82, Cys-88, Cys-91, and Cys-169. S-adenosyl-L-methionine is bound by residues Gln-272, Phe-301, Asn-306, Glu-322, Asn-349, and Asp-370. The Nucleophile role is filled by Cys-396.

This sequence belongs to the class I-like SAM-binding methyltransferase superfamily. RNA M5U methyltransferase family. RlmD subfamily.

It carries out the reaction uridine(1939) in 23S rRNA + S-adenosyl-L-methionine = 5-methyluridine(1939) in 23S rRNA + S-adenosyl-L-homocysteine + H(+). Its function is as follows. Catalyzes the formation of 5-methyl-uridine at position 1939 (m5U1939) in 23S rRNA. The chain is 23S rRNA (uracil(1939)-C(5))-methyltransferase RlmD from Vibrio vulnificus (strain YJ016).